A 427-amino-acid polypeptide reads, in one-letter code: Glutamate-1-semialdehyde 2,1-aminomutase 1 (427 aa).

K267 carries the post-translational modification N6-(pyridoxal phosphate)lysine.

It belongs to the class-III pyridoxal-phosphate-dependent aminotransferase family. HemL subfamily. In terms of assembly, homodimer. Requires pyridoxal 5'-phosphate as cofactor.

It is found in the cytoplasm. It carries out the reaction (S)-4-amino-5-oxopentanoate = 5-aminolevulinate. Its pathway is porphyrin-containing compound metabolism; protoporphyrin-IX biosynthesis; 5-aminolevulinate from L-glutamyl-tRNA(Glu): step 2/2. The chain is Glutamate-1-semialdehyde 2,1-aminomutase 1 from Staphylococcus epidermidis (strain ATCC 35984 / DSM 28319 / BCRC 17069 / CCUG 31568 / BM 3577 / RP62A).